Consider the following 728-residue polypeptide: Catalase-peroxidase 1 (728 aa).

Positions Trp91–Tyr218 form a cross-link, tryptophyl-tyrosyl-methioninium (Trp-Tyr) (with M-244). His92 acts as the Proton acceptor in catalysis. The tryptophyl-tyrosyl-methioninium (Tyr-Met) (with W-91) cross-link spans Tyr218–Met244. His259 contacts heme b.

This sequence belongs to the peroxidase family. Peroxidase/catalase subfamily. In terms of assembly, homodimer or homotetramer. Heme b serves as cofactor. Post-translationally, formation of the three residue Trp-Tyr-Met cross-link is important for the catalase, but not the peroxidase activity of the enzyme.

It catalyses the reaction H2O2 + AH2 = A + 2 H2O. The catalysed reaction is 2 H2O2 = O2 + 2 H2O. Functionally, bifunctional enzyme with both catalase and broad-spectrum peroxidase activity. This chain is Catalase-peroxidase 1, found in Burkholderia ambifaria (strain ATCC BAA-244 / DSM 16087 / CCUG 44356 / LMG 19182 / AMMD) (Burkholderia cepacia (strain AMMD)).